The chain runs to 71 residues: NAD(P)H-quinone oxidoreductase subunit O (71 aa).

This sequence belongs to the complex I NdhO subunit family. As to quaternary structure, NDH-1 can be composed of about 15 different subunits; different subcomplexes with different compositions have been identified which probably have different functions.

It localises to the cellular thylakoid membrane. The enzyme catalyses a plastoquinone + NADH + (n+1) H(+)(in) = a plastoquinol + NAD(+) + n H(+)(out). It catalyses the reaction a plastoquinone + NADPH + (n+1) H(+)(in) = a plastoquinol + NADP(+) + n H(+)(out). Functionally, NDH-1 shuttles electrons from an unknown electron donor, via FMN and iron-sulfur (Fe-S) centers, to quinones in the respiratory and/or the photosynthetic chain. The immediate electron acceptor for the enzyme in this species is believed to be plastoquinone. Couples the redox reaction to proton translocation, and thus conserves the redox energy in a proton gradient. Cyanobacterial NDH-1 also plays a role in inorganic carbon-concentration. The protein is NAD(P)H-quinone oxidoreductase subunit O of Picosynechococcus sp. (strain ATCC 27264 / PCC 7002 / PR-6) (Agmenellum quadruplicatum).